The following is a 270-amino-acid chain: Fluoride-specific ion channel FluC 1 (270 aa).

4 helical membrane passes run 4–24 (IIIL…FIML), 35–55 (LDIL…TALY), 67–87 (IIGT…YGSV), and 96–116 (AFLI…VAVL). Residues Gly-74 and Ser-77 each contribute to the Na(+) site.

This sequence belongs to the fluoride channel Fluc/FEX (TC 1.A.43) family.

It localises to the cell inner membrane. The enzyme catalyses fluoride(in) = fluoride(out). With respect to regulation, na(+) is not transported, but it plays an essential structural role and its presence is essential for fluoride channel function. Its function is as follows. Fluoride-specific ion channel. Important for reducing fluoride concentration in the cell, thus reducing its toxicity. This chain is Fluoride-specific ion channel FluC 1, found in Brucella abortus biovar 1 (strain 9-941).